Reading from the N-terminus, the 264-residue chain is Glutamate racemase (264 aa).

Residues 10–11 (DS) and 42–43 (YG) each bind substrate. The Proton donor/acceptor role is filled by Cys73. Position 74–75 (74–75 (NT)) interacts with substrate. The active-site Proton donor/acceptor is Cys183. 184–185 (TH) is a binding site for substrate.

This sequence belongs to the aspartate/glutamate racemases family.

It catalyses the reaction L-glutamate = D-glutamate. It functions in the pathway cell wall biogenesis; peptidoglycan biosynthesis. Provides the (R)-glutamate required for cell wall biosynthesis. This is Glutamate racemase from Streptococcus pneumoniae (strain ATCC BAA-255 / R6).